The primary structure comprises 426 residues: MMEMRNVKGTKDYLPEEQVLRNKIKRACEDTFERYGCKPLETPTLNMYELMSYKYGGGDEILKEIYTLQDQGKRELALRYDLTIPFAKVVAMNPNLRLPFKRYEIGKVFRDGPIKQGRFREFIQCDVDIVGVESVMAEAELMAMAFELFRTLNLEITIQYNNRKLLNGILESINIPTELTSDVILSLDKIEKIGIDGVRKDVLERGISEEMADTICNTVLSCLKLTIADFKEAFNNPLVADGVNELQQLQQYLIALGINENTIFNPFLARGLTMYTGTVYEIFLKDRSITSSIGSGGRYDNIIGAFRGDNMNYPTVGISFGLDVIYTALSQKETISSTADVFIIPLGTELQCLQIAQQLRSTTSLKVELELAGRKLKRALNYANKENIPYVLIIGEDELSTNTVVLRNMKEGSEVKVPISSLSRYL.

The protein belongs to the class-II aminoacyl-tRNA synthetase family. Homodimer.

The protein resides in the cytoplasm. The catalysed reaction is tRNA(His) + L-histidine + ATP = L-histidyl-tRNA(His) + AMP + diphosphate + H(+). In Bacillus cereus (strain ATCC 14579 / DSM 31 / CCUG 7414 / JCM 2152 / NBRC 15305 / NCIMB 9373 / NCTC 2599 / NRRL B-3711), this protein is Histidine--tRNA ligase 1.